A 150-amino-acid chain; its full sequence is 3-dehydroquinate dehydratase (150 aa).

Residue tyrosine 26 is the Proton acceptor of the active site. Substrate is bound by residues asparagine 77, histidine 83, and aspartate 90. Histidine 103 functions as the Proton donor in the catalytic mechanism. Substrate-binding positions include 104–105 and arginine 114; that span reads IS.

It belongs to the type-II 3-dehydroquinase family. In terms of assembly, homododecamer.

The catalysed reaction is 3-dehydroquinate = 3-dehydroshikimate + H2O. Its pathway is metabolic intermediate biosynthesis; chorismate biosynthesis; chorismate from D-erythrose 4-phosphate and phosphoenolpyruvate: step 3/7. Functionally, catalyzes a trans-dehydration via an enolate intermediate. In Buchnera aphidicola subsp. Acyrthosiphon pisum (strain 5A), this protein is 3-dehydroquinate dehydratase.